Here is a 938-residue protein sequence, read N- to C-terminus: ATP-dependent 6-phosphofructokinase subunit beta (938 aa).

The N-terminal catalytic PFK domain 1 stretch occupies residues 1–552 (MTQSLPLLNG…HLDNFMAINS (552 aa)). ATP contacts are provided by residues Gly-185, 249 to 250 (RC), and 279 to 282 (GDGS). Mg(2+) is bound at residue Asp-280. Beta-D-fructose 6-phosphate is bound by residues 325 to 327 (SID), Arg-362, 369 to 371 (MGR), Glu-426, Arg-454, and 460 to 463 (HVQR). Asp-327 functions as the Proton acceptor in the catalytic mechanism. The interval 553-566 (ADHIEPKLPEHTHM) is interdomain linker. The C-terminal regulatory PFK domain 2 stretch occupies residues 567–938 (KIAIVNVGAP…ADHLVGRKKL (372 aa)). Residues Arg-637, 695–699 (TLSNN), Arg-733, 740–742 (QGG), Lys-826, 832–835 (HVQQ), and Arg-915 contribute to the beta-D-fructose 2,6-bisphosphate site.

It belongs to the phosphofructokinase type A (PFKA) family. ATP-dependent PFK group I subfamily. Eukaryotic two domain clade 'E' sub-subfamily. Heterooctamer of 4 alpha and 4 beta chains. Requires Mg(2+) as cofactor.

The protein localises to the cytoplasm. The enzyme catalyses beta-D-fructose 6-phosphate + ATP = beta-D-fructose 1,6-bisphosphate + ADP + H(+). Its pathway is carbohydrate degradation; glycolysis; D-glyceraldehyde 3-phosphate and glycerone phosphate from D-glucose: step 3/4. With respect to regulation, allosterically activated by ADP, AMP, or fructose 2,6-bisphosphate, and allosterically inhibited by ATP or citrate. Catalyzes the phosphorylation of D-fructose 6-phosphate to fructose 1,6-bisphosphate by ATP, the first committing step of glycolysis. The protein is ATP-dependent 6-phosphofructokinase subunit beta (PFK2) of Kluyveromyces lactis (strain ATCC 8585 / CBS 2359 / DSM 70799 / NBRC 1267 / NRRL Y-1140 / WM37) (Yeast).